Here is a 908-residue protein sequence, read N- to C-terminus: Protein translocase subunit SecA (908 aa).

ATP contacts are provided by residues glutamine 87, 105 to 109, and aspartate 507; that span reads GEGKT. Residues 860 to 898 are disordered; the sequence is EALGNAEESDEASDQSVKTFERAGAKVGRNDPCPCGSGK. The Zn(2+) site is built by cysteine 892, cysteine 894, cysteine 903, and histidine 904.

Belongs to the SecA family. In terms of assembly, monomer and homodimer. Part of the essential Sec protein translocation apparatus which comprises SecA, SecYEG and auxiliary proteins SecDF-YajC and YidC. Zn(2+) is required as a cofactor.

It is found in the cell inner membrane. The protein localises to the cytoplasm. The catalysed reaction is ATP + H2O + cellular proteinSide 1 = ADP + phosphate + cellular proteinSide 2.. Part of the Sec protein translocase complex. Interacts with the SecYEG preprotein conducting channel. Has a central role in coupling the hydrolysis of ATP to the transfer of proteins into and across the cell membrane, serving both as a receptor for the preprotein-SecB complex and as an ATP-driven molecular motor driving the stepwise translocation of polypeptide chains across the membrane. In Methylobacillus flagellatus (strain ATCC 51484 / DSM 6875 / VKM B-1610 / KT), this protein is Protein translocase subunit SecA.